Here is a 201-residue protein sequence, read N- to C-terminus: Imidazole glycerol phosphate synthase subunit HisH (201 aa).

Residues Met1–Phe201 enclose the Glutamine amidotransferase type-1 domain. The active-site Nucleophile is Cys79. Catalysis depends on residues His183 and Glu185.

In terms of assembly, heterodimer of HisH and HisF.

The protein resides in the cytoplasm. The catalysed reaction is 5-[(5-phospho-1-deoxy-D-ribulos-1-ylimino)methylamino]-1-(5-phospho-beta-D-ribosyl)imidazole-4-carboxamide + L-glutamine = D-erythro-1-(imidazol-4-yl)glycerol 3-phosphate + 5-amino-1-(5-phospho-beta-D-ribosyl)imidazole-4-carboxamide + L-glutamate + H(+). The enzyme catalyses L-glutamine + H2O = L-glutamate + NH4(+). The protein operates within amino-acid biosynthesis; L-histidine biosynthesis; L-histidine from 5-phospho-alpha-D-ribose 1-diphosphate: step 5/9. IGPS catalyzes the conversion of PRFAR and glutamine to IGP, AICAR and glutamate. The HisH subunit catalyzes the hydrolysis of glutamine to glutamate and ammonia as part of the synthesis of IGP and AICAR. The resulting ammonia molecule is channeled to the active site of HisF. This is Imidazole glycerol phosphate synthase subunit HisH from Chlorobaculum tepidum (strain ATCC 49652 / DSM 12025 / NBRC 103806 / TLS) (Chlorobium tepidum).